A 377-amino-acid polypeptide reads, in one-letter code: Presenilin-associated rhomboid-like protein, mitochondrial (377 aa).

A mitochondrion-targeting transit peptide spans 1–50; it reads MALQGWVQRGWRCGPAWAPPLGGGYRELSATQAPRLLGRRFNLFVQQKCG. Over 51–99 the chain is Mitochondrial matrix; the sequence is FRKAPRKVEPRRSDTGSSGEAYKRSALIPPLEETVFYPSPYPIRTLVKP. Serine 63 and serine 68 each carry phosphoserine. Residues 100–119 form a helical membrane-spanning segment; that stretch reads FFFTIGFTGCAFGSAAIWQY. Topologically, residues 120–165 are mitochondrial intermembrane; the sequence is ESLKSRVQSYFDGIKADWLDSIRPQKEGNLRKEINKWWNSLSDGQR. The chain crosses the membrane as a helical span at residues 166–185; the sequence is TVTGIIAANALVFCLWRVPS. Residues 186-205 lie on the Mitochondrial matrix side of the membrane; sequence LQRTMIRYFTSNPASKVLCS. The chain crosses the membrane as a helical span at residues 206–228; that stretch reads PMLLSTFSHFSLFHMAANMYVLW. Over 229 to 242 the chain is Mitochondrial intermembrane; it reads SFSSSIVNILGQEQ. A helical membrane pass occupies residues 243 to 260; that stretch reads FVAVYLSAGVISNFVSYV. At 261-270 the chain is on the mitochondrial matrix side; it reads CKVATGRYGP. Residues 271–287 form a helical membrane-spanning segment; that stretch reads SLGASGAIMTVLAAVCT. Serine 275 serves as the catalytic Nucleophile. Residues 288-293 are Mitochondrial intermembrane-facing; the sequence is KIPEGR. The chain crosses the membrane as a helical span at residues 294 to 316; the sequence is LAIIFLPVFTFTAGNALKAIIAM. At 317-330 the chain is on the mitochondrial matrix side; sequence DTAGMILGWKFFDH. Residues 331-352 form a helical membrane-spanning segment; the sequence is AAHLGGALFGIWYITYGHELIW. Residue histidine 333 is part of the active site. Residues 353–377 are Mitochondrial intermembrane-facing; the sequence is KNREPLVKIWHEIRTNGPKKGGGSK.

Belongs to the peptidase S54 family. In terms of assembly, interacts with PSEN1 and PSEN2. Binds OPA1. P-beta is proteolytically processed (beta-cleavage) in a PARL-dependent manner.

The protein localises to the mitochondrion inner membrane. The protein resides in the nucleus. The catalysed reaction is Cleaves type-1 transmembrane domains using a catalytic dyad composed of serine and histidine that are contributed by different transmembrane domains.. In terms of biological role, required for the control of apoptosis during postnatal growth. Essential for proteolytic processing of an antiapoptotic form of OPA1 which prevents the release of mitochondrial cytochrome c in response to intrinsic apoptotic signals. Required for the maturation of PINK1 into its 52kDa mature form after its cleavage by mitochondrial-processing peptidase (MPP). Promotes cleavage of serine/threonine-protein phosphatase PGAM5 in damaged mitochondria in response to loss of mitochondrial membrane potential. Mediates differential cleavage of PINK1 and PGAM5 depending on the health status of mitochondria, disassociating from PINK1 and associating with PGAM5 in response to mitochondrial membrane potential loss. Required for processing of CLPB into a form with higher protein disaggregase activity by removing an autoinhibitory N-terminal peptide. Promotes processing of DIABLO/SMAC in the mitochondrion which is required for DIABLO apoptotic activity. Also required for cleavage of STARD7 and TTC19. Promotes changes in mitochondria morphology regulated by phosphorylation of P-beta domain. The chain is Presenilin-associated rhomboid-like protein, mitochondrial (Parl) from Mus musculus (Mouse).